Consider the following 227-residue polypeptide: MAYPFQLGLQDATSPIMEELLHFHDHTLMIVFLISSLVLYIISLMLTTKLTHTSTMDAQEVETVWTILPAIILILIALPSLRILYMMDEINNPSLTVKTMGHQWYWSYEYTDYEDLNFDSYMIPTQELKPGELRLLEVDNRVVLPMEMTIRMLISSEDVLHSWAVPSLGLKTDAIPGRLNQTTLMAMRPGLYYGQCSEICGSNHSFMPIVLEMVPLSYFEAWSALMV.

The Mitochondrial intermembrane portion of the chain corresponds to 1-14 (MAYPFQLGLQDATS). The helical transmembrane segment at 15–45 (PIMEELLHFHDHTLMIVFLISSLVLYIISLM) threads the bilayer. At 46–59 (LTTKLTHTSTMDAQ) the chain is on the mitochondrial matrix side. Residues 60 to 87 (EVETVWTILPAIILILIALPSLRILYMM) traverse the membrane as a helical segment. Over 88–227 (DEINNPSLTV…YFEAWSALMV (140 aa)) the chain is Mitochondrial intermembrane. His161, Cys196, Glu198, Cys200, His204, and Met207 together coordinate Cu cation. A Mg(2+)-binding site is contributed by Glu198. The residue at position 218 (Tyr218) is a Phosphotyrosine.

It belongs to the cytochrome c oxidase subunit 2 family. Component of the cytochrome c oxidase (complex IV, CIV), a multisubunit enzyme composed of 14 subunits. The complex is composed of a catalytic core of 3 subunits MT-CO1, MT-CO2 and MT-CO3, encoded in the mitochondrial DNA, and 11 supernumerary subunits COX4I, COX5A, COX5B, COX6A, COX6B, COX6C, COX7A, COX7B, COX7C, COX8 and NDUFA4, which are encoded in the nuclear genome. The complex exists as a monomer or a dimer and forms supercomplexes (SCs) in the inner mitochondrial membrane with NADH-ubiquinone oxidoreductase (complex I, CI) and ubiquinol-cytochrome c oxidoreductase (cytochrome b-c1 complex, complex III, CIII), resulting in different assemblies (supercomplex SCI(1)III(2)IV(1) and megacomplex MCI(2)III(2)IV(2)). Found in a complex with TMEM177, COA6, COX18, COX20, SCO1 and SCO2. Interacts with TMEM177 in a COX20-dependent manner. Interacts with COX20. Interacts with COX16. Cu cation is required as a cofactor.

The protein localises to the mitochondrion inner membrane. The enzyme catalyses 4 Fe(II)-[cytochrome c] + O2 + 8 H(+)(in) = 4 Fe(III)-[cytochrome c] + 2 H2O + 4 H(+)(out). Component of the cytochrome c oxidase, the last enzyme in the mitochondrial electron transport chain which drives oxidative phosphorylation. The respiratory chain contains 3 multisubunit complexes succinate dehydrogenase (complex II, CII), ubiquinol-cytochrome c oxidoreductase (cytochrome b-c1 complex, complex III, CIII) and cytochrome c oxidase (complex IV, CIV), that cooperate to transfer electrons derived from NADH and succinate to molecular oxygen, creating an electrochemical gradient over the inner membrane that drives transmembrane transport and the ATP synthase. Cytochrome c oxidase is the component of the respiratory chain that catalyzes the reduction of oxygen to water. Electrons originating from reduced cytochrome c in the intermembrane space (IMS) are transferred via the dinuclear copper A center (CU(A)) of subunit 2 and heme A of subunit 1 to the active site in subunit 1, a binuclear center (BNC) formed by heme A3 and copper B (CU(B)). The BNC reduces molecular oxygen to 2 water molecules using 4 electrons from cytochrome c in the IMS and 4 protons from the mitochondrial matrix. The chain is Cytochrome c oxidase subunit 2 (MT-CO2) from Cuon alpinus (Dhole).